The chain runs to 173 residues: Adenine phosphoribosyltransferase (173 aa).

The protein belongs to the purine/pyrimidine phosphoribosyltransferase family. In terms of assembly, homodimer.

The protein resides in the cytoplasm. The enzyme catalyses AMP + diphosphate = 5-phospho-alpha-D-ribose 1-diphosphate + adenine. It functions in the pathway purine metabolism; AMP biosynthesis via salvage pathway; AMP from adenine: step 1/1. Its function is as follows. Catalyzes a salvage reaction resulting in the formation of AMP, that is energically less costly than de novo synthesis. The chain is Adenine phosphoribosyltransferase from Thermotoga maritima (strain ATCC 43589 / DSM 3109 / JCM 10099 / NBRC 100826 / MSB8).